The following is a 578-amino-acid chain: Sulfite reductase [NADPH] hemoprotein beta-component (578 aa).

[4Fe-4S] cluster is bound by residues C441, C447, C487, and C491. C491 contributes to the siroheme binding site.

This sequence belongs to the nitrite and sulfite reductase 4Fe-4S domain family. In terms of assembly, alpha(8)-beta(8). The alpha component is a flavoprotein, the beta component is a hemoprotein. Requires siroheme as cofactor. It depends on [4Fe-4S] cluster as a cofactor.

It carries out the reaction hydrogen sulfide + 3 NADP(+) + 3 H2O = sulfite + 3 NADPH + 4 H(+). It participates in sulfur metabolism; hydrogen sulfide biosynthesis; hydrogen sulfide from sulfite (NADPH route): step 1/1. Functionally, component of the sulfite reductase complex that catalyzes the 6-electron reduction of sulfite to sulfide. This is one of several activities required for the biosynthesis of L-cysteine from sulfate. In Vibrio vulnificus (strain YJ016), this protein is Sulfite reductase [NADPH] hemoprotein beta-component.